The sequence spans 453 residues: Serine incorporator 1 (453 aa).

Residue Gly-2 is the site of N-myristoyl glycine attachment. At 2-39 (GSVLGLCSVASWIPCLCGSAPCLLCRCCPSGNNSTVTR) the chain is on the cytoplasmic side. The chain crosses the membrane as a helical span at residues 40-60 (LIYALFLLVGVCVACVMLIPG). Over 61–88 (MEEQLNKIPGFCENEKGVVPCNILVGYK) the chain is Lumenal. A helical transmembrane segment spans residues 89-109 (AVYRLCFGLAMFYLLLSLLMI). The Cytoplasmic portion of the chain corresponds to 110–123 (KVKSSSDPRAAVHN). A helical membrane pass occupies residues 124-144 (GFWFFKFATAVAIIIGAFFIP). The Lumenal segment spans residues 145-151 (EGTFTTV). Residues 152–172 (WFYVGMAGAFCFILIQLVLLI) traverse the membrane as a helical segment. The Cytoplasmic portion of the chain corresponds to 173-197 (DFAHSWNESWVEKMEEGNSRCWYAA). Residues 198–218 (LLSATALNYLLSLVAVVLFFV) traverse the membrane as a helical segment. Over 219–231 (YYTHPASCAENKA) the chain is Lumenal. The chain crosses the membrane as a helical span at residues 232–252 (FISVNMLLCIGASVMSILPKI). At 253–259 (QESQPRS) the chain is on the cytoplasmic side. A helical membrane pass occupies residues 260–280 (GLLQSSVITVYTMYLTWSAMT). Over 281–309 (NEPETNCNPSLLSIIGFNTTRPIPKDGQS) the chain is Lumenal. Residues 310–330 (VQWWHPQGIIGLVLFLLCVFY) form a helical membrane-spanning segment. Residues 331–387 (SSIRTSNNSQVNKLTLTSDESTLIEDGNGRSDGSLDDGDGIHRAVDNERDGVTYSYS) are Cytoplasmic-facing. Phosphoserine is present on Ser-351. Thr-352 carries the phosphothreonine modification. 2 positions are modified to phosphoserine: Ser-361 and Ser-364. The chain crosses the membrane as a helical span at residues 388 to 408 (FFHFMLFLASLYIMMTLTNWY). The Lumenal portion of the chain corresponds to 409 to 426 (RYEPSREMKSQWTAVWVK). A helical membrane pass occupies residues 427–447 (ISSSWIGLVLYVWTLVAPLVL). At 448–453 (TNRDFD) the chain is on the cytoplasmic side.

It belongs to the TDE1 family. As to quaternary structure, interacts with SPTLC1. Highly expressed in the neuronal populations such as Purkinje cells in the cerebellum, brainstem and spinal motor neurons, locus coeruleus and raphe nuclei.

It is found in the endoplasmic reticulum membrane. Functionally, enhances the incorporation of serine into phosphatidylserine and sphingolipids. In Mus musculus (Mouse), this protein is Serine incorporator 1 (Serinc1).